The following is a 110-amino-acid chain: uncharacterized protein (110 aa).

The segment at 38-62 (SVQQNARAEEAEAAAPPAEEDSLPD) is disordered.

This is an uncharacterized protein from Mus musculus (Mouse).